We begin with the raw amino-acid sequence, 110 residues long: Nucleoid-associated protein Mvan_5528 (110 aa).

The protein belongs to the YbaB/EbfC family. As to quaternary structure, homodimer.

The protein resides in the cytoplasm. The protein localises to the nucleoid. Functionally, binds to DNA and alters its conformation. May be involved in regulation of gene expression, nucleoid organization and DNA protection. The polypeptide is Nucleoid-associated protein Mvan_5528 (Mycolicibacterium vanbaalenii (strain DSM 7251 / JCM 13017 / BCRC 16820 / KCTC 9966 / NRRL B-24157 / PYR-1) (Mycobacterium vanbaalenii)).